The chain runs to 460 residues: NADH-ubiquinone oxidoreductase chain 4 (460 aa).

Transmembrane regions (helical) follow at residues 20–42, 61–81, 94–113, 114–134, 148–168, 195–215, 225–245, 258–278, 285–304, 308–330, 351–371, 380–400, and 436–456; these read SKWL…LTWL, PLST…ILAS, RMYI…AFGA, TKII…LIII, TYFL…LLLL, IWWA…GMHL, PVAG…YGMM, LAYP…LVCL, SLIA…GILI, WGFT…LFCL, MVLP…LALP, LMII…TGMG, and LLMT…ELMW.

The protein belongs to the complex I subunit 4 family. Core subunit of respiratory chain NADH dehydrogenase (Complex I) which is composed of 45 different subunits.

The protein resides in the mitochondrion inner membrane. The catalysed reaction is a ubiquinone + NADH + 5 H(+)(in) = a ubiquinol + NAD(+) + 4 H(+)(out). In terms of biological role, core subunit of the mitochondrial membrane respiratory chain NADH dehydrogenase (Complex I) which catalyzes electron transfer from NADH through the respiratory chain, using ubiquinone as an electron acceptor. Essential for the catalytic activity and assembly of complex I. This Danio rerio (Zebrafish) protein is NADH-ubiquinone oxidoreductase chain 4 (mt-nd4).